A 332-amino-acid chain; its full sequence is Ubiquinone biosynthesis protein COQ4, mitochondrial (332 aa).

The transit peptide at 1–24 (MLRLGVSRTPINRQFVGYEQRRHF) directs the protein to the mitochondrion. His-210, Asp-211, His-214, and Glu-226 together coordinate Zn(2+).

It belongs to the COQ4 family. As to quaternary structure, component of a multi-subunit COQ enzyme complex, composed of at least COQ3, COQ4, COQ5, COQ6, COQ7 and COQ9. Requires Zn(2+) as cofactor.

The protein resides in the mitochondrion inner membrane. The catalysed reaction is a 4-hydroxy-3-methoxy-5-(all-trans-polyprenyl)benzoate + H(+) = a 2-methoxy-6-(all-trans-polyprenyl)phenol + CO2. It participates in cofactor biosynthesis; ubiquinone biosynthesis. Functionally, lyase that catalyzes the C1-decarboxylation of 4-hydroxy-3-methoxy-5-(all-trans-polyprenyl)benzoic acid into 2-methoxy-6-(all-trans-polyprenyl)phenol during ubiquinone biosynthesis. The protein is Ubiquinone biosynthesis protein COQ4, mitochondrial of Zygosaccharomyces rouxii (strain ATCC 2623 / CBS 732 / NBRC 1130 / NCYC 568 / NRRL Y-229).